The chain runs to 196 residues: Riboflavin transporter RibU (196 aa).

A run of 5 helical transmembrane segments spans residues 14–34 (LIAI…VPII), 46–66 (IVPV…WVIL), 80–100 (VNTY…ITVL), 120–140 (LISS…FVAI), and 164–184 (MVLP…MIIL).

The protein belongs to the prokaryotic riboflavin transporter (P-RFT) (TC 2.A.87) family. In terms of assembly, in E.coli forms a stable energy-coupling factor (ECF) transporter complex probably composed of a membrane-embedded substrate-binding protein (S component), 2 ATP-binding proteins (A components) and 2 transmembrane proteins (T component). May be able to interact with more than 1 S component at a time.

It is found in the cell membrane. Probable riboflavin-binding protein that interacts with the energy-coupling factor (ECF) ABC-transporter complex. Unlike classic ABC transporters this ECF transporter provides the energy necessary to transport a number of different substrates. The substrates themselves are bound by transmembrane, not extracytoplasmic soluble proteins and transport it into cells. The protein is Riboflavin transporter RibU (ribU) of Leuconostoc mesenteroides subsp. mesenteroides (strain ATCC 8293 / DSM 20343 / BCRC 11652 / CCM 1803 / JCM 6124 / NCDO 523 / NBRC 100496 / NCIMB 8023 / NCTC 12954 / NRRL B-1118 / 37Y).